The following is a 180-amino-acid chain: UPF0149 protein XCV3523 (180 aa).

The protein belongs to the UPF0149 family.

The polypeptide is UPF0149 protein XCV3523 (Xanthomonas euvesicatoria pv. vesicatoria (strain 85-10) (Xanthomonas campestris pv. vesicatoria)).